The sequence spans 176 residues: Large ribosomal subunit protein uL10 (176 aa).

It belongs to the universal ribosomal protein uL10 family. As to quaternary structure, part of the ribosomal stalk of the 50S ribosomal subunit. The N-terminus interacts with L11 and the large rRNA to form the base of the stalk. The C-terminus forms an elongated spine to which L12 dimers bind in a sequential fashion forming a multimeric L10(L12)X complex.

Its function is as follows. Forms part of the ribosomal stalk, playing a central role in the interaction of the ribosome with GTP-bound translation factors. This is Large ribosomal subunit protein uL10 from Sorangium cellulosum (strain So ce56) (Polyangium cellulosum (strain So ce56)).